The following is a 56-amino-acid chain: Large ribosomal subunit protein bL32 (56 aa).

The disordered stretch occupies residues 1-26 (MAVQQNKPTRSKRGMRRSHDSLTTAA).

It belongs to the bacterial ribosomal protein bL32 family.

This is Large ribosomal subunit protein bL32 from Erwinia tasmaniensis (strain DSM 17950 / CFBP 7177 / CIP 109463 / NCPPB 4357 / Et1/99).